Consider the following 508-residue polypeptide: tRNA-2-methylthio-N(6)-dimethylallyladenosine synthase (508 aa).

The region spanning K13–V131 is the MTTase N-terminal domain. Positions 22, 60, 94, 168, 172, and 175 each coordinate [4Fe-4S] cluster. The region spanning R154–E385 is the Radical SAM core domain. Positions K387–V455 constitute a TRAM domain.

Belongs to the methylthiotransferase family. MiaB subfamily. As to quaternary structure, monomer. Requires [4Fe-4S] cluster as cofactor.

It localises to the cytoplasm. The enzyme catalyses N(6)-dimethylallyladenosine(37) in tRNA + (sulfur carrier)-SH + AH2 + 2 S-adenosyl-L-methionine = 2-methylsulfanyl-N(6)-dimethylallyladenosine(37) in tRNA + (sulfur carrier)-H + 5'-deoxyadenosine + L-methionine + A + S-adenosyl-L-homocysteine + 2 H(+). Functionally, catalyzes the methylthiolation of N6-(dimethylallyl)adenosine (i(6)A), leading to the formation of 2-methylthio-N6-(dimethylallyl)adenosine (ms(2)i(6)A) at position 37 in tRNAs that read codons beginning with uridine. In Streptomyces avermitilis (strain ATCC 31267 / DSM 46492 / JCM 5070 / NBRC 14893 / NCIMB 12804 / NRRL 8165 / MA-4680), this protein is tRNA-2-methylthio-N(6)-dimethylallyladenosine synthase.